We begin with the raw amino-acid sequence, 79 residues long: Cell division protein ZapB (79 aa).

Residues L3–V79 are a coiled coil. Polar residues predominate over residues S36–Q45. The segment at S36–S63 is disordered. The span at H46 to S57 shows a compositional bias: basic and acidic residues.

It belongs to the ZapB family. Homodimer. The ends of the coiled-coil dimer bind to each other, forming polymers. Interacts with FtsZ.

Its subcellular location is the cytoplasm. In terms of biological role, non-essential, abundant cell division factor that is required for proper Z-ring formation. It is recruited early to the divisome by direct interaction with FtsZ, stimulating Z-ring assembly and thereby promoting cell division earlier in the cell cycle. Its recruitment to the Z-ring requires functional FtsA or ZipA. The protein is Cell division protein ZapB of Salmonella agona (strain SL483).